A 139-amino-acid polypeptide reads, in one-letter code: Protein archease (139 aa).

The Ca(2+) site is built by aspartate 12, aspartate 138, and isoleucine 139.

The protein belongs to the archease family.

Activates the tRNA-splicing ligase complex by facilitating the enzymatic turnover of catalytic subunit RtcB. Acts by promoting the guanylylation of RtcB, a key intermediate step in tRNA ligation. Can also alter the NTP specificity of RtcB such that ATP, dGTP or ITP is used efficiently. This Saccharolobus islandicus (strain Y.G.57.14 / Yellowstone #1) (Sulfolobus islandicus) protein is Protein archease.